Here is a 203-residue protein sequence, read N- to C-terminus: Orotate phosphoribosyltransferase (203 aa).

Residues R94, K98, H100, and 120 to 128 each bind 5-phospho-alpha-D-ribose 1-diphosphate; that span reads EDLISTGGS. Position 124 (S124) interacts with orotate.

It belongs to the purine/pyrimidine phosphoribosyltransferase family. PyrE subfamily. As to quaternary structure, homodimer. Mg(2+) serves as cofactor.

It catalyses the reaction orotidine 5'-phosphate + diphosphate = orotate + 5-phospho-alpha-D-ribose 1-diphosphate. It participates in pyrimidine metabolism; UMP biosynthesis via de novo pathway; UMP from orotate: step 1/2. In terms of biological role, catalyzes the transfer of a ribosyl phosphate group from 5-phosphoribose 1-diphosphate to orotate, leading to the formation of orotidine monophosphate (OMP). In Staphylococcus saprophyticus subsp. saprophyticus (strain ATCC 15305 / DSM 20229 / NCIMB 8711 / NCTC 7292 / S-41), this protein is Orotate phosphoribosyltransferase.